An 802-amino-acid chain; its full sequence is uncharacterized protein (802 aa).

The region spanning 6-41 is the EF-hand 1 domain; it reads SRSEKVKRIFQQFDGNLDGGLSREEMSALVVAVNPR. 7 TPR repeats span residues 229 to 262, 264 to 296, 305 to 338, 339 to 372, 373 to 406, 407 to 440, and 442 to 474; these read FDGHMAIGKVLYEHQLFKEALVSFKRACELQPTD, RPHFKAGNCLYVLGKYKESKDEFLLALEAAESG, PQIYVNLGISLEGEGMVLSACEYYREAAILCPTH, YRALKLLGSALFGVGEYRAAVKALEEAIYLKPDY, ADAHCDLASSLHAMGEDERAIEVFQRAIDLKPGH, VDALYNLGGLYMDLGRFQRASEMYTRVLAVWPNH, and RAQLNKAVSLLGAGETEEAKRALKEALKMTNRV. The EF-hand 2 domain occupies 595-630; it reads AIKAINEKILSVLDDSGSGRVDLGMFYAVIAPLCGG.

This is an uncharacterized protein from Arabidopsis thaliana (Mouse-ear cress).